The sequence spans 150 residues: Large ribosomal subunit protein uL15 (150 aa).

Residues 1–60 (MKLSDLRPNPGANKRRKRVGRGPGSGHGKTATRGHKGQKSRSGGLKDPRRFEGGRSTTLM) are disordered. Residues 30–39 (TATRGHKGQK) show a composition bias toward basic residues. Over residues 44–53 (GLKDPRRFEG) the composition is skewed to basic and acidic residues.

It belongs to the universal ribosomal protein uL15 family. In terms of assembly, part of the 50S ribosomal subunit.

Its function is as follows. Binds to the 23S rRNA. The polypeptide is Large ribosomal subunit protein uL15 (Thermus thermophilus (strain ATCC BAA-163 / DSM 7039 / HB27)).